The primary structure comprises 265 residues: Undecaprenyl-diphosphatase (265 aa).

8 helical membrane passes run 1–21 (MDWF…FLPI), 39–59 (QGLA…MMYY), 83–103 (LKLG…GFLG), 114–134 (ALVI…SDAF), 144–164 (LGVA…IPGT), 188–208 (SFLL…KDLI), 218–238 (MMAL…VFFI), and 244–264 (VGML…LFWL).

The protein belongs to the UppP family.

It localises to the cell inner membrane. It catalyses the reaction di-trans,octa-cis-undecaprenyl diphosphate + H2O = di-trans,octa-cis-undecaprenyl phosphate + phosphate + H(+). Functionally, catalyzes the dephosphorylation of undecaprenyl diphosphate (UPP). Confers resistance to bacitracin. The chain is Undecaprenyl-diphosphatase from Alcanivorax borkumensis (strain ATCC 700651 / DSM 11573 / NCIMB 13689 / SK2).